Reading from the N-terminus, the 111-residue chain is Probable 4-amino-4-deoxy-L-arabinose-phosphoundecaprenol flippase subunit ArnE (111 aa).

The Cytoplasmic portion of the chain corresponds to 1–37 (MIWLTLVFASLLSVAGQLCQKQATCFVAINKRRKHIA). Residues 38–58 (LWLGLALACLGLAMVLWLLVL) traverse the membrane as a helical segment. The EamA domain maps to 40–109 (LGLALACLGL…IIGGIVILGS (70 aa)). Over 59–60 (QN) the chain is Periplasmic. Residues 61 to 81 (VPVGIAYPMLSLNFVWVTLAA) traverse the membrane as a helical segment. The Cytoplasmic segment spans residues 82-87 (VKLWHE). A helical membrane pass occupies residues 88–108 (PVSPRHWCGVAFIIGGIVILG). Residues 109-111 (STV) are Periplasmic-facing.

Belongs to the ArnE family. In terms of assembly, heterodimer of ArnE and ArnF.

Its subcellular location is the cell inner membrane. The protein operates within bacterial outer membrane biogenesis; lipopolysaccharide biosynthesis. Functionally, translocates 4-amino-4-deoxy-L-arabinose-phosphoundecaprenol (alpha-L-Ara4N-phosphoundecaprenol) from the cytoplasmic to the periplasmic side of the inner membrane. In Escherichia coli (strain 55989 / EAEC), this protein is Probable 4-amino-4-deoxy-L-arabinose-phosphoundecaprenol flippase subunit ArnE.